Consider the following 740-residue polypeptide: Pheromone-regulated membrane protein 10 (740 aa).

Disordered stretches follow at residues 1-48, 65-97, and 241-269; these read MGKN…RSGL, FADE…KEEC, and NQPG…PTGE. Residues 7–18 show a composition bias toward basic and acidic residues; sequence QAAEGEEARRGS. Positions 19–33 are enriched in low complexity; that stretch reads ESSGSSAEPSGAVAE. A compositionally biased stretch (acidic residues) spans 67-76; sequence DEDEVVEQDE. Residues 256–267 are compositionally biased toward polar residues; that stretch reads SAQTLSSETLPT. A run of 10 helical transmembrane segments spans residues 422–442, 445–465, 475–495, 499–519, 541–561, 574–594, 599–619, 622–642, 651–671, and 707–727; these read AWMC…FAFG, WINL…QFIV, VFEI…GSIP, ICFG…YIIL, IIYS…FGWI, ELSP…LSLI, WSQI…TYWS, HFTA…GIMG, GLAM…GIAS, and ITMI…TLVV.

Belongs to the ThrE exporter (TC 2.A.79) family.

It localises to the membrane. The sequence is that of Pheromone-regulated membrane protein 10 from Eremothecium gossypii (strain ATCC 10895 / CBS 109.51 / FGSC 9923 / NRRL Y-1056) (Yeast).